Here is a 390-residue protein sequence, read N- to C-terminus: Homoserine O-succinyltransferase (390 aa).

The AB hydrolase-1 domain occupies 59–369 (NAVLVCHALN…PHGHDAFLLD (311 aa)). Catalysis depends on serine 165, which acts as the Nucleophile. Substrate is bound at residue arginine 235. Residues aspartate 330 and histidine 363 contribute to the active site. Aspartate 364 contacts substrate.

It belongs to the AB hydrolase superfamily. MetX family. As to quaternary structure, homodimer.

Its subcellular location is the cytoplasm. It carries out the reaction L-homoserine + succinyl-CoA = O-succinyl-L-homoserine + CoA. It participates in amino-acid biosynthesis; L-methionine biosynthesis via de novo pathway; O-succinyl-L-homoserine from L-homoserine: step 1/1. Its function is as follows. Transfers a succinyl group from succinyl-CoA to L-homoserine, forming succinyl-L-homoserine. This Cupriavidus pinatubonensis (strain JMP 134 / LMG 1197) (Cupriavidus necator (strain JMP 134)) protein is Homoserine O-succinyltransferase.